The chain runs to 122 residues: Holo-[acyl-carrier-protein] synthase (122 aa).

2 residues coordinate Mg(2+): Asp5 and Glu54.

This sequence belongs to the P-Pant transferase superfamily. AcpS family. It depends on Mg(2+) as a cofactor.

It is found in the cytoplasm. The catalysed reaction is apo-[ACP] + CoA = holo-[ACP] + adenosine 3',5'-bisphosphate + H(+). Transfers the 4'-phosphopantetheine moiety from coenzyme A to a Ser of acyl-carrier-protein. The sequence is that of Holo-[acyl-carrier-protein] synthase from Aquifex aeolicus (strain VF5).